The primary structure comprises 456 residues: MLTALQADLASVVEGVNLVWVLTVTFLIFFMHAGFAMLEAGQVRAKNVANQLTKNLLTWSIGVIVFFLLGAAVSAIVAGLTGGPATTVADAFMGLYAPDASATTAWVDWLFGAVFAMTAATIVSGAVAGRARLRAYLTYTILIAGVIYPVVVGVTWAGGFLNGLGFHDFAGGMIVHGMGGIAGLTAAWIIGPRMNRFNADGSANVIPGHSITFAVLGTLILAFGWYGFNVGTAAAPLAYSDGGVTLGSFAYVGRVALVTTLGMAAGALGAGGVAFYKTGKVDTLYVANGVLAGLVGITAIADDIVWPGALVVGLLAGAQLPIVFEFVEKRLRIDDVCAVFPVHGSAGVLGTLLYPVFAVPVWHEGASIVSLAVPQVVGVGVIAVWTFVATTAIFGGFRAIGQVRVSADHERQGLDTAEHGVDTYPEFGSPDADTGIRADGSGIPYGHGFMTTQEDE.

Helical transmembrane passes span 18 to 38 (LVWV…FAML), 61 to 81 (IGVI…AGLT), 109 to 129 (WLFG…AVAG), 141 to 161 (ILIA…GGFL), 170 to 190 (AGGM…AWII), 211 to 231 (ITFA…FNVG), 255 to 275 (VALV…GVAF), 281 to 301 (VDTL…TAIA), 304 to 324 (IVWP…PIVF), 339 to 359 (VFPV…VFAV), and 377 to 397 (VGVG…FGGF).

It belongs to the ammonia transporter channel (TC 1.A.11.2) family. In terms of assembly, homotrimer. Interacts with both GlnK1 and GlnK2 after ammonium shock.

It is found in the cell membrane. Its function is as follows. Involved in the uptake of ammonium/ammonia (NH(4)(+)/NH(3)). Transport is electrogenic. This Haloferax mediterranei (strain ATCC 33500 / DSM 1411 / JCM 8866 / NBRC 14739 / NCIMB 2177 / R-4) (Halobacterium mediterranei) protein is Ammonium transporter Amt2.